The chain runs to 581 residues: Ras-specific guanine nucleotide-releasing factor RalGPS1 (581 aa).

The interval 1 to 31 (MYRRNGLPASVSITSRNTQDSSSSESLDGRS) is disordered. The Ras-GEF domain occupies 49 to 288 (TPEEFASQIT…YSLSLKIEPG (240 aa)). Positions 320-339 (PDTSVVAHLPTPPPARHRKS) are disordered. The PXXP signature appears at 329–332 (PTPP). Residues 455-567 (SITIEGPLRR…WHRHLAEACR (113 aa)) enclose the PH domain.

It localises to the cytoplasm. The protein resides in the cell membrane. Its function is as follows. Guanine nucleotide exchange factor. May be involved in cytoskeletal organization. This is Ras-specific guanine nucleotide-releasing factor RalGPS1 (ralgps1) from Danio rerio (Zebrafish).